The sequence spans 1002 residues: TOG array regulator of axonemal microtubules protein 2 (1002 aa).

Disordered regions lie at residues 54-74 (SSVL…EDQS), 131-214 (KRRL…SAQE), 332-351 (ETRS…KVQV), 402-421 (PLRG…PRRN), and 426-450 (LQRK…GFAR).

Belongs to the Crescerin family.

The sequence is that of TOG array regulator of axonemal microtubules protein 2 (Togaram2) from Mus musculus (Mouse).